The following is a 685-amino-acid chain: Eukaryotic peptide chain release factor GTP-binding subunit (685 aa).

Disordered stretches follow at residues 1–34 (MSDS…GYQA), 63–99 (YNPD…GGRG), and 112–234 (GYQA…NVTS). Residue S2 is modified to N-acetylserine. Residues 2–239 (SDSNQGNNQQ…ANVTSADALI (238 aa)) form an interaction with PAB1 region. Positions 5-135 (NQGNNQQNYQ…LNDFQKQQKQ (131 aa)) are prion domain (PrD). Over residues 117–129 (FQPQSQGMSLNDF) the composition is skewed to polar residues. The segment at 139–249 (KPKKTLKLVS…KEQEEEVDDE (111 aa)) is charged. A compositionally biased stretch (basic and acidic residues) spans 166–222 (AESDKKEEEKSAETKEPTKEPTKVEEPVKKEEKPVQTEEKTEEKSELPKVEDLKISE). The segment covering 223 to 234 (STHNTNNANVTS) has biased composition (polar residues). One can recognise a tr-type G domain in the interval 258–484 (KDHVSLIFMG…YLDTMNHVDR (227 aa)). Residues 267–274 (GHVDAGKS) form a G1 region. 267–274 (GHVDAGKS) contributes to the GTP binding site. Residues 323–327 (GKTIE) form a G2 region. The segment at 344–347 (DAPG) is G3. GTP-binding positions include 406 to 409 (NKMD) and 449 to 450 (GY). A G4 region spans residues 406–409 (NKMD). The segment at 448 to 450 (SGY) is G5. Phosphoserine is present on S571.

This sequence belongs to the TRAFAC class translation factor GTPase superfamily. Classic translation factor GTPase family. ERF3 subfamily. Heterodimer of two subunits, one of which binds GTP. Interacts with polyadenylate-binding protein PAB1, and TPA1.

It is found in the cytoplasm. It carries out the reaction GTP + H2O = GDP + phosphate + H(+). Its function is as follows. GTPase component of the eRF1-eRF3-GTP ternary complex, a ternary complex that mediates translation termination in response to the termination codons UAA, UAG and UGA. SUP35/eRF3 mediates SUP45/eRF1 delivery to stop codons: The eRF1-eRF3-GTP complex binds to a stop codon in the ribosomal A-site. GTP hydrolysis by SUP35/eRF3 induces a conformational change that leads to its dissociation, permitting SUP45/eRF1 to accommodate fully in the A-site. Recruited by polyadenylate-binding protein PAB1 to poly(A)-tails of mRNAs. Interaction with PAB1 is also required for regulation of normal mRNA decay through translation termination-coupled poly(A) shortening. The sequence is that of Eukaryotic peptide chain release factor GTP-binding subunit (SUP35) from Saccharomyces cerevisiae (strain ATCC 204508 / S288c) (Baker's yeast).